The primary structure comprises 398 residues: Succinate--CoA ligase [ADP-forming] subunit beta (398 aa).

Positions 9–250 (KQLFARYGVP…VDEEDPVELQ (242 aa)) constitute an ATP-grasp domain. ATP contacts are provided by residues lysine 50, 57–59 (GRG), glutamate 104, leucine 107, and glutamate 112. The Mg(2+) site is built by asparagine 205 and aspartate 219. Residues asparagine 270 and 327–329 (GIM) contribute to the substrate site.

It belongs to the succinate/malate CoA ligase beta subunit family. Heterotetramer of two alpha and two beta subunits. Mg(2+) is required as a cofactor.

The enzyme catalyses succinate + ATP + CoA = succinyl-CoA + ADP + phosphate. The catalysed reaction is GTP + succinate + CoA = succinyl-CoA + GDP + phosphate. Its pathway is carbohydrate metabolism; tricarboxylic acid cycle; succinate from succinyl-CoA (ligase route): step 1/1. Succinyl-CoA synthetase functions in the citric acid cycle (TCA), coupling the hydrolysis of succinyl-CoA to the synthesis of either ATP or GTP and thus represents the only step of substrate-level phosphorylation in the TCA. The beta subunit provides nucleotide specificity of the enzyme and binds the substrate succinate, while the binding sites for coenzyme A and phosphate are found in the alpha subunit. The chain is Succinate--CoA ligase [ADP-forming] subunit beta from Sorangium cellulosum (strain So ce56) (Polyangium cellulosum (strain So ce56)).